The chain runs to 185 residues: Comitin (185 aa).

Residues 1-123 (MELLRQGEHL…YKQILYSSKP (123 aa)) enclose the Bulb-type lectin domain. The tract at residues 138 to 185 (SGHPQSAYPPQQPGYGYPAQPGYPPQPGYPPQHGYPPQHGYPQQPGYY) is disordered. Residues 141–157 (PQSAYPPQQPGYGYPAQ) show a composition bias toward low complexity. Repeat copies occupy residues 153–158 (GYPAQP), 159–164 (GYPPQP), 165–170 (GYPPQH), 171–176 (GYPPQH), and 177–182 (GYPQQP). Positions 153–182 (GYPAQPGYPPQPGYPPQHGYPPQHGYPQQP) are 5 X 6 AA tandem repeats of G-Y-P-X-Q-[PH]. The span at 158 to 171 (PGYPPQPGYPPQHG) shows a compositional bias: pro residues. Low complexity predominate over residues 172–185 (YPPQHGYPQQPGYY).

Homodimer in solution. Post-translationally, the N-terminus is blocked.

Its subcellular location is the golgi apparatus membrane. The protein localises to the endomembrane system. It localises to the cytoplasm. The protein resides in the cytoskeleton. In terms of biological role, may have a role in cell motility. It has high affinity for both G-actin and F-actin. Binds to vesicle membranes via mannose residues and, by way of its interaction with actin, links these membranes to the cytoskeleton. The sequence is that of Comitin (comA) from Dictyostelium discoideum (Social amoeba).